A 355-amino-acid polypeptide reads, in one-letter code: MSVNYAAGLSPYADKGKCGLPEIFDPPEELERKVWELARLVRQSSNVVFHTGAGISTASGIPDFRGPHGVWTMEERGLAPKFDTTFENARPTQTHMALVQLERVGLLHFVVSQNVDGLHVRSGFPRDKLAELHGNMFVEECAKCKTQYVRDTVVGTMGLKTTGRLCTVAKARGLRACRGELRDTILDWEDALPDRDLALADEASRNADLSITLGTSLQIRPSGNLPLATKRRGGKLVIVNLQPTKHDRHADLRIHGYVDDVMTQLMKHLGLEIPAWDGPRVLEKALPPLPRPPTPKLEPTDKSLAQLNGSVPADSKPEPCTWHNGSQPASPKREQPDSPAPRRPPKRVKAEVTPS.

The residue at position 2 (serine 2) is an N-acetylserine. Serine 10 is modified (phosphoserine). Residues 27–272 (PEELERKVWE…TQLMKHLGLE (246 aa)) enclose the Deacetylase sirtuin-type domain. Lysine 33 bears the N6-acetyllysine mark. Positions 53, 57, 64, 65, 71, 113, and 133 each coordinate NAD(+). The active-site Proton acceptor is histidine 133. Zn(2+) contacts are provided by cysteine 141, cysteine 144, and cysteine 166. Lysine 170 is covalently cross-linked (Glycyl lysine isopeptide (Lys-Gly) (interchain with G-Cter in ubiquitin)). Residue cysteine 177 participates in Zn(2+) binding. Residues glycine 214, serine 216, asparagine 240, glutamine 242, and valine 258 each contribute to the NAD(+) site. A disordered region spans residues 284–355 (KALPPLPRPP…KRVKAEVTPS (72 aa)). Residues 287–296 (PPLPRPPTPK) are compositionally biased toward pro residues. Position 294 is a phosphothreonine (threonine 294). 2 positions are modified to phosphoserine: serine 303 and serine 330.

The protein belongs to the sirtuin family. Class IV subfamily. Homodimer; binds to nucleosomes and DNA ends as a homodimer. Interacts with RELA; interferes with RELA binding to target DNA. Interacts with SMARCA5; promoting recruitment of SMARCA5/SNF2H to double-strand breaks (DSBs) sites. Interacts with the mTORC2 complex; preventing the ability of SIRT6 to deacetylate FOXO1. Interacts with the CLOCK-BMAL1 complex; recruited by the CLOCK-BMAL1 complex to regulate expression of clock-controlled genes. Interacts with CSNK2A2; preventing CSNK2A2 localization to the nucleus. Post-translationally, acetylated at Lys-33. Deacetylation at Lys-33 by SIRT1 promotes homomultimerization and binding to double-strand breaks (DSBs) sites. In terms of processing, phosphorylation at Ser-10 by MAPK8/JNK1 in response to oxidative stress stimulates the mono-ADP-ribosyltransferase activity on PARP1, leading to PARP1 recruitment to double-strand breaks (DSBs). Monoubiquitinated at Lys-170 by STUB1/CHIP, preventing its degradation by the proteasome. Post-translationally, sumoylated, leading to specifically decrease ability to deacetylate histone H3 at 'Lys-56' (H3K56ac).

It localises to the nucleus. The protein resides in the chromosome. It is found in the telomere. The protein localises to the endoplasmic reticulum. The catalysed reaction is N(6)-acetyl-L-lysyl-[protein] + NAD(+) + H2O = 2''-O-acetyl-ADP-D-ribose + nicotinamide + L-lysyl-[protein]. It carries out the reaction N(6)-tetradecanoyl-L-lysyl-[protein] + NAD(+) + H2O = 2''-O-tetradecanoyl-ADP-D-ribose + nicotinamide + L-lysyl-[protein]. The enzyme catalyses N(6)-hexadecanoyl-L-lysyl-[protein] + NAD(+) + H2O = 2''-O-hexadecanoyl-ADP-D-ribose + nicotinamide + L-lysyl-[protein]. It catalyses the reaction L-lysyl-[protein] + NAD(+) = N(6)-(ADP-D-ribosyl)-L-lysyl-[protein] + nicotinamide + H(+). The catalysed reaction is L-arginyl-[protein] + NAD(+) = N(omega)-(ADP-D-ribosyl)-L-arginyl-[protein] + nicotinamide + H(+). With respect to regulation, compared to the defatty-acylase activity, the protein deacetylase activity is weak in vitro, and requires activation. The histone deacetylase activity is strongly activated upon binding to nucleosomes and chromatin in vivo. Two molecules of SIRT6 associate with the acidic patch of one nucleosome, while the C-terminal disordered region of SIRT6 associates with nucleosomal DNA, leading to efficient histone deacetylation. The protein-lysine deacetylase activity is also activated by long-chain free fatty-acids. Its function is as follows. NAD-dependent protein deacetylase, deacylase and mono-ADP-ribosyltransferase that plays an essential role in DNA damage repair, telomere maintenance, metabolic homeostasis, inflammation, tumorigenesis and aging. Displays protein-lysine deacetylase or defatty-acylase (demyristoylase and depalmitoylase) activity, depending on the context. Acts as a key histone deacetylase by catalyzing deacetylation of histone H3 at 'Lys-9', 'Lys-18' and 'Lys-56' (H3K9ac, H3K18ac and H3K56ac, respectively), suppressing target gene expression of several transcription factors, including NF-kappa-B. Acts as an inhibitor of transcription elongation by mediating deacetylation of H3K9ac and H3K56ac, preventing release of NELFE from chromatin and causing transcriptional pausing. Involved in DNA repair by promoting double-strand break (DSB) repair: acts as a DSB sensor by recognizing and binding DSB sites, leading to (1) recruitment of DNA repair proteins, such as SMARCA5/SNF2H, and (2) deacetylation of histone H3K9ac and H3K56ac. SIRT6 participation to DSB repair is probably involved in extension of life span. Also promotes DNA repair by deacetylating non-histone proteins, such as DDB2 and p53/TP53. Specifically deacetylates H3K18ac at pericentric heterochromatin, thereby maintaining pericentric heterochromatin silencing at centromeres and protecting against genomic instability and cellular senescence. Involved in telomere maintenance by catalyzing deacetylation of histone H3 in telomeric chromatin, regulating telomere position effect and telomere movement in response to DNA damage. Required for embryonic stem cell differentiation by mediating histone deacetylation of H3K9ac. Plays a major role in metabolism by regulating processes such as glycolysis, gluconeogenesis, insulin secretion and lipid metabolism. Inhibits glycolysis via histone deacetylase activity and by acting as a corepressor of the transcription factor HIF1A, thereby controlling the expression of multiple glycolytic genes. Has tumor suppressor activity by repressing glycolysis, thereby inhibiting the Warburg effect. Also regulates glycolysis and tumorigenesis by mediating deacetylation and nuclear export of non-histone proteins, such as isoform M2 of PKM (PKM2). Acts as a negative regulator of gluconeogenesis by mediating deacetylation of non-histone proteins, such as FOXO1 and KAT2A/GCN5. Promotes beta-oxidation of fatty acids during fasting by catalyzing deacetylation of NCOA2, inducing coactivation of PPARA. Acts as a regulator of lipid catabolism in brown adipocytes, both by catalyzing deacetylation of histones and non-histone proteins, such as FOXO1. Also acts as a regulator of circadian rhythms, both by regulating expression of clock-controlled genes involved in lipid and carbohydrate metabolism, and by catalyzing deacetylation of PER2. The defatty-acylase activity is specifically involved in regulation of protein secretion. Has high activity toward long-chain fatty acyl groups and mediates protein-lysine demyristoylation and depalmitoylation of target proteins, such as RRAS2 and TNF, thereby regulating their secretion. Also acts as a mono-ADP-ribosyltransferase by mediating mono-ADP-ribosylation of PARP1, TRIM28/KAP1 or SMARCC2/BAF170. Mono-ADP-ribosyltransferase activity is involved in DNA repair, cellular senescence, repression of LINE-1 retrotransposon elements and regulation of transcription. The chain is NAD-dependent protein deacylase sirtuin-6 from Castor canadensis (American beaver).